A 380-amino-acid chain; its full sequence is Probable dual-specificity RNA methyltransferase RlmN (380 aa).

Glu-112 acts as the Proton acceptor in catalysis. The 241-residue stretch at Tyr-118–Glu-358 folds into the Radical SAM core domain. Cys-125 and Cys-363 form a disulfide bridge. The [4Fe-4S] cluster site is built by Cys-132, Cys-136, and Cys-139. S-adenosyl-L-methionine contacts are provided by residues Gly-187–Glu-188, Ser-221, Ser-244–His-246, and Asn-320. Cys-363 functions as the S-methylcysteine intermediate in the catalytic mechanism.

This sequence belongs to the radical SAM superfamily. RlmN family. The cofactor is [4Fe-4S] cluster.

The protein localises to the cytoplasm. The catalysed reaction is adenosine(2503) in 23S rRNA + 2 reduced [2Fe-2S]-[ferredoxin] + 2 S-adenosyl-L-methionine = 2-methyladenosine(2503) in 23S rRNA + 5'-deoxyadenosine + L-methionine + 2 oxidized [2Fe-2S]-[ferredoxin] + S-adenosyl-L-homocysteine. It carries out the reaction adenosine(37) in tRNA + 2 reduced [2Fe-2S]-[ferredoxin] + 2 S-adenosyl-L-methionine = 2-methyladenosine(37) in tRNA + 5'-deoxyadenosine + L-methionine + 2 oxidized [2Fe-2S]-[ferredoxin] + S-adenosyl-L-homocysteine. In terms of biological role, specifically methylates position 2 of adenine 2503 in 23S rRNA and position 2 of adenine 37 in tRNAs. This Salinispora arenicola (strain CNS-205) protein is Probable dual-specificity RNA methyltransferase RlmN.